Consider the following 506-residue polypeptide: Anaerobic nitric oxide reductase transcription regulator NorR (506 aa).

At Asp-57 the chain carries 4-aspartylphosphate. The 230-residue stretch at 187-416 (MIGLSPAMTQ…LEHAIHRAVV (230 aa)) folds into the Sigma-54 factor interaction domain. ATP is bound by residues 215 to 222 (GETGTGKE) and 278 to 287 (ADNGTLFLDE). Positions 481 to 500 (WAASARALETDVANLHRLAK) form a DNA-binding region, H-T-H motif.

The protein operates within nitrogen metabolism; nitric oxide reduction. In terms of biological role, required for the expression of anaerobic nitric oxide (NO) reductase, acts as a transcriptional activator for at least the norVW operon. Activation also requires sigma-54. The protein is Anaerobic nitric oxide reductase transcription regulator NorR of Salmonella gallinarum (strain 287/91 / NCTC 13346).